The chain runs to 181 residues: Large ribosomal subunit protein uL30 (181 aa).

The protein belongs to the universal ribosomal protein uL30 family. In terms of assembly, part of the 50S ribosomal subunit.

The protein is Large ribosomal subunit protein uL30 of Hyperthermus butylicus (strain DSM 5456 / JCM 9403 / PLM1-5).